Here is a 496-residue protein sequence, read N- to C-terminus: Cobyric acid synthase (496 aa).

Positions 255–445 (DLEIAVLKLP…LHGLLDNGPW (191 aa)) constitute a GATase cobBQ-type domain. Catalysis depends on cysteine 336, which acts as the Nucleophile. Residue histidine 437 is part of the active site.

Belongs to the CobB/CobQ family. CobQ subfamily.

Its pathway is cofactor biosynthesis; adenosylcobalamin biosynthesis. Its function is as follows. Catalyzes amidations at positions B, D, E, and G on adenosylcobyrinic A,C-diamide. NH(2) groups are provided by glutamine, and one molecule of ATP is hydrogenolyzed for each amidation. This chain is Cobyric acid synthase, found in Parasynechococcus marenigrum (strain WH8102).